The chain runs to 1006 residues: E3 ubiquitin-protein ligase MIB1 (1006 aa).

The 69-residue stretch at 6 to 74 folds into the MIB/HERC2 1 domain; sequence NNRVMVEGVG…AYDLRILDSA (69 aa). Residues 80–132 form a ZZ-type zinc finger; sequence HDGTMCDTCRQQPIIGIRWKCAECTNYDLCTVCYHGDKHHLRHRFYRITTPGS. Zn(2+)-binding residues include C85, C88, C100, C103, C109, C112, H118, and H122. In terms of domain architecture, MIB/HERC2 2 spans 143–221; the sequence is SKKITARGIF…MSDLKCVQDA (79 aa). The residue at position 408 (S408) is a Phosphoserine. ANK repeat units follow at residues 430–460, 463–492, 496–525, 529–558, 562–591, 595–627, 631–661, 665–694, and 698–729; these read DLNE…DVNG, AGHT…DVEA, DGDR…DLNA, RRQT…HPSL, EGDT…DVTI, NGFN…IVDE, DGYT…NLDI, NQQT…KLDI, and DGDT…KVDA. 2 consecutive RING-type zinc fingers follow at residues 819-854 and 866-901; these read CMVC…LICK and CVVC…VQCR. Residues 935-962 are a coiled coil; sequence QKDKDNTNVNADVQKLQQQLQDIKEQTM. The RING-type 3 zinc-finger motif lies at 963-996; that stretch reads CPVCLDRLKNMIFLCGHGTCQLCGDRMSECPICR.

Interacts with CEP131 and PCM1. Post-translationally, ubiquitinated; possibly via autoubiquitination. Ubiquitinated; this modification is inhibited in response to cellular stress, such as ultraviolet light (UV) radiation or heat shock. In terms of tissue distribution, widely expressed at low level. Expressed at higher level in spinal cord, ovary, whole brain, and all specific brain regions examined.

It localises to the cytoplasm. The protein resides in the cytoskeleton. The protein localises to the microtubule organizing center. It is found in the centrosome. Its subcellular location is the centriolar satellite. It localises to the cell membrane. It carries out the reaction S-ubiquitinyl-[E2 ubiquitin-conjugating enzyme]-L-cysteine + [acceptor protein]-L-lysine = [E2 ubiquitin-conjugating enzyme]-L-cysteine + N(6)-ubiquitinyl-[acceptor protein]-L-lysine.. It functions in the pathway protein modification; protein ubiquitination. Its function is as follows. E3 ubiquitin-protein ligase that mediates ubiquitination of Delta receptors, which act as ligands of Notch proteins. Positively regulates the Delta-mediated Notch signaling by ubiquitinating the intracellular domain of Delta, leading to endocytosis of Delta receptors. Probably mediates ubiquitination and subsequent proteasomal degradation of DAPK1, thereby antagonizing anti-apoptotic effects of DAPK1 to promote TNF-induced apoptosis. Involved in ubiquitination of centriolar satellite CEP131, CEP290 and PCM1 proteins and hence inhibits primary cilium formation in proliferating cells. Mediates 'Lys-63'-linked polyubiquitination of TBK1, which probably participates in kinase activation. Functionally, (Microbial infection) During adenovirus infection, mediates ubiquitination of Core-capsid bridging protein. This allows viral genome delivery into nucleus for infection. The chain is E3 ubiquitin-protein ligase MIB1 (MIB1) from Homo sapiens (Human).